The primary structure comprises 295 residues: Indole-3-glycerol phosphate synthase (295 aa).

The protein belongs to the TrpC family.

It catalyses the reaction 1-(2-carboxyphenylamino)-1-deoxy-D-ribulose 5-phosphate + H(+) = (1S,2R)-1-C-(indol-3-yl)glycerol 3-phosphate + CO2 + H2O. The protein operates within amino-acid biosynthesis; L-tryptophan biosynthesis; L-tryptophan from chorismate: step 4/5. This is Indole-3-glycerol phosphate synthase from Prochlorococcus marinus (strain NATL1A).